The sequence spans 425 residues: Histidine--tRNA ligase (425 aa).

Belongs to the class-II aminoacyl-tRNA synthetase family. In terms of assembly, homodimer.

It localises to the cytoplasm. It catalyses the reaction tRNA(His) + L-histidine + ATP = L-histidyl-tRNA(His) + AMP + diphosphate + H(+). This Listeria monocytogenes serovar 1/2a (strain ATCC BAA-679 / EGD-e) protein is Histidine--tRNA ligase.